The chain runs to 295 residues: Taste receptor type 2 member 120 (295 aa).

Residues 1–5 (MDLTE) lie on the Extracellular side of the membrane. A helical membrane pass occupies residues 6 to 26 (WIVTIIMMIEFLLGNCANFFI). At 27–45 (MVVNAIDCMKRRKISSADR) the chain is on the cytoplasmic side. Residues 46-66 (IITALAISRIGLLWAMLMNWH) traverse the membrane as a helical segment. Residues 67–83 (SRVYTTDTYSFQVTAFS) lie on the Extracellular side of the membrane. The helical transmembrane segment at 84-104 (GIIWAITNHFTTWLGTILSMF) threads the bilayer. The Cytoplasmic segment spans residues 105 to 125 (YLFKIANFSNCLFLHLKRKLD). Residues 126 to 146 (SVLLVIFLVSSLLVFAYLGVV) traverse the membrane as a helical segment. Residues 147-177 (NIKKIAWLSVHEGNVTVKSKLMNIASIRDTL) lie on the Extracellular side of the membrane. N-linked (GlcNAc...) asparagine glycosylation is present at Asn-160. A helical transmembrane segment spans residues 178–198 (LFSLINIAPFGISLTCVLLLI). The Cytoplasmic segment spans residues 199–230 (YSLGKHLKNMKFYGKGCQDQSTMVHIRALQTV). Residues 231–251 (VSFLLLYATYSSCVIISGWSI) form a helical membrane-spanning segment. Residues 252 to 255 (QNVP) are Extracellular-facing. The chain crosses the membrane as a helical span at residues 256-276 (IFLFCVTIGAFYPAGHSCILI). The Cytoplasmic segment spans residues 277 to 295 (WGNQKLKQFLLLFLRQMKC).

The protein belongs to the G-protein coupled receptor T2R family.

The protein localises to the membrane. Functionally, putative taste receptor which may play a role in the perception of bitterness. The protein is Taste receptor type 2 member 120 of Rattus norvegicus (Rat).